A 211-amino-acid polypeptide reads, in one-letter code: ATP phosphoribosyltransferase (211 aa).

This sequence belongs to the ATP phosphoribosyltransferase family. Short subfamily. In terms of assembly, heteromultimer composed of HisG and HisZ subunits.

The protein localises to the cytoplasm. The catalysed reaction is 1-(5-phospho-beta-D-ribosyl)-ATP + diphosphate = 5-phospho-alpha-D-ribose 1-diphosphate + ATP. The protein operates within amino-acid biosynthesis; L-histidine biosynthesis; L-histidine from 5-phospho-alpha-D-ribose 1-diphosphate: step 1/9. Catalyzes the condensation of ATP and 5-phosphoribose 1-diphosphate to form N'-(5'-phosphoribosyl)-ATP (PR-ATP). Has a crucial role in the pathway because the rate of histidine biosynthesis seems to be controlled primarily by regulation of HisG enzymatic activity. This is ATP phosphoribosyltransferase from Lacticaseibacillus casei (strain BL23) (Lactobacillus casei).